Reading from the N-terminus, the 437-residue chain is Na(+)/H(+) antiporter NhaA (437 aa).

A run of 11 helical transmembrane segments spans residues 12-32, 65-85, 103-123, 133-153, 162-182, 186-206, 214-234, 308-328, 333-353, 377-397, and 412-432; these read SMNI…AVIA, LTMI…MVGL, ALPF…YSMV, GLAI…SLLG, IFLT…IAIF, HVAY…YFIG, IFFL…GIHS, GAVN…VMFS, VIGG…FLGI, ISGV…IANL, and LGVL…LHWV.

The protein belongs to the NhaA Na(+)/H(+) (TC 2.A.33) antiporter family.

Its subcellular location is the cell inner membrane. The enzyme catalyses Na(+)(in) + 2 H(+)(out) = Na(+)(out) + 2 H(+)(in). Its function is as follows. Na(+)/H(+) antiporter that extrudes sodium in exchange for external protons. This Bacteroides fragilis (strain YCH46) protein is Na(+)/H(+) antiporter NhaA.